A 115-amino-acid chain; its full sequence is MAKIKKGDLVVVISGNRDDRGKQGRVLEVLTDSNRVVVEGVRRVKKHTKVSQTQRGSRTGGIETIEAPIHVSNVMLVDPETKKGTRVGYRTEEVERNGRARTVRVRVAKRSGKDV.

It belongs to the universal ribosomal protein uL24 family. Part of the 50S ribosomal subunit.

Functionally, one of two assembly initiator proteins, it binds directly to the 5'-end of the 23S rRNA, where it nucleates assembly of the 50S subunit. One of the proteins that surrounds the polypeptide exit tunnel on the outside of the subunit. The protein is Large ribosomal subunit protein uL24 of Beutenbergia cavernae (strain ATCC BAA-8 / DSM 12333 / CCUG 43141 / JCM 11478 / NBRC 16432 / NCIMB 13614 / HKI 0122).